A 399-amino-acid polypeptide reads, in one-letter code: P2X purinoceptor 1 (399 aa).

The Cytoplasmic segment spans residues 1 to 28 (MARRLQDELSAFFFEYDTPRMVLVRNKK). Residues 29–50 (VGVIFRLIQLVVLVYVIGWVFV) form a helical membrane-spanning segment. At 51–338 (YEKGYQTSSG…IPTMTTIGSG (288 aa)) the chain is on the extracellular side. CTP contacts are provided by lysine 68, lysine 70, and lysine 140. An ATP-binding site is contributed by lysine 70. Intrachain disulfides connect cysteine 117-cysteine 165, cysteine 126-cysteine 149, and cysteine 132-cysteine 159. Residues asparagine 153 and asparagine 184 are each glycosylated (N-linked (GlcNAc...) asparagine). Residue threonine 186 participates in CTP binding. Residue threonine 186 coordinates ATP. Residue asparagine 210 is glycosylated (N-linked (GlcNAc...) asparagine). 2 cysteine pairs are disulfide-bonded: cysteine 217–cysteine 227 and cysteine 261–cysteine 270. Positions 286, 290, and 292 each coordinate ATP. CTP contacts are provided by asparagine 290 and arginine 292. Asparagine 300 is a glycosylation site (N-linked (GlcNAc...) asparagine). Lysine 309 contributes to the CTP binding site. ATP is bound at residue lysine 309. The tract at residues 331 to 338 (TMTTIGSG) is pore-forming motif. Residues 339 to 358 (IGIFGVATVLCDLLLLHILP) traverse the membrane as a helical segment. Over 359–399 (KRHYYKQKKFKYAEDMGPGEGERDPAATSSTLGLQENMRTS) the chain is Cytoplasmic. The interval 374-399 (MGPGEGERDPAATSSTLGLQENMRTS) is disordered. Positions 385 to 399 (ATSSTLGLQENMRTS) are enriched in polar residues. Phosphoserine occurs at positions 387 and 388. Threonine 389 carries the phosphothreonine modification.

It belongs to the P2X receptor family. In terms of assembly, functional P2XRs are organized as homomeric and heteromeric trimers. Forms heterodimer with P2RX2. Forms heterodimer with P2RX4. Forms heterodimer with P2RX5. In terms of tissue distribution, expressed in smooth muscle of the bladder and arteries.

The protein resides in the cell membrane. It catalyses the reaction Ca(2+)(in) = Ca(2+)(out). The catalysed reaction is K(+)(in) = K(+)(out). It carries out the reaction Na(+)(in) = Na(+)(out). Its activity is regulated as follows. Activated by low concentrations of ATP (&lt;1 uM). Undergoes rapid desensitisation. Sensitives to the ATP agonist:alpha/beta-methylene-ATP. Modulated by cholesterol. In terms of biological role, ATP-gated nonselective transmembrane cation channel permeable to potassium, sodium and with relatively high calcium permeability. Furthermore, CTP functions as a weak affinity agonist for P2RX1. Plays a role in male fertility, bladder contraction and platelet aggregation. Specifically, plays an important role in neurogenic contraction of smooth muscle of the vas deferens, and therefore is essential for normal male reproductive function. In addition, contributes to smooth muscle contractions of the urinary bladder. On platelets, contributes to platelet activation and aggregation and thereby, also to thrombosis. On neutrophils, it is involved in chemotaxis and in mitigating the activation of circulating cells. The protein is P2X purinoceptor 1 (P2rx1) of Mus musculus (Mouse).